Reading from the N-terminus, the 504-residue chain is Diacylglycerol O-acyltransferase 1B (504 aa).

Residues 1-72 are disordered; it reads MAISDEPESV…VNSQQQNEKQ (72 aa). Over residues 24–41 the composition is skewed to polar residues; that stretch reads SATSTAGLFNSPETTTDS. Over residues 53 to 65 the composition is skewed to low complexity; sequence DDSINSDDAAVNS. The next 7 membrane-spanning stretches (helical) occupy residues 108–128, 152–172, 184–204, 209–229, 259–279, 301–321, and 348–368; these read HAGL…RLII, WPLF…FIVE, VVVV…VLVI, SAFV…LKLV, YPYN…TLCY, LIIF…PIVQ, and VWLC…AELL. The short motif at 375-381 is the FYXDWWN motif element; that stretch reads FYKDWWN. 3 helical membrane passes run 416–436, 438–458, and 471–491; these read AAAL…CIAV, CHIF…LVLI, and VGNM…CVLL. Histidine 430 is a catalytic residue.

It belongs to the membrane-bound acyltransferase family. Sterol o-acyltransferase subfamily. As to expression, highly expressed in flowers and pods. Expressed at low levels in roots, stems and leaves.

The protein resides in the endoplasmic reticulum membrane. The catalysed reaction is an acyl-CoA + a 1,2-diacyl-sn-glycerol = a triacyl-sn-glycerol + CoA. It functions in the pathway glycerolipid metabolism; triacylglycerol biosynthesis. In terms of biological role, major contributors to triacylglycerol (TAG) synthesis and oil accumulation in developing seeds. Catalyzes the acylation of the sn-3 hydroxy group of sn-1,2-diacylglycerol using acyl-CoA. Has a marked preference for oleoyl-CoA and sn-1,2-dioleoylglycerol over vernoloyl-CoA and sn-1,2-divernoloylglycerol. This chain is Diacylglycerol O-acyltransferase 1B, found in Glycine max (Soybean).